The following is a 433-amino-acid chain: Protein CLP1 homolog (433 aa).

ATP contacts are provided by residues Glu22, Arg61, and 128–133 (DVGKTT).

It belongs to the Clp1 family. Clp1 subfamily.

The protein resides in the nucleus. Its function is as follows. Required for endonucleolytic cleavage during polyadenylation-dependent pre-mRNA 3'-end formation. This is Protein CLP1 homolog from Brugia malayi (Filarial nematode worm).